Consider the following 398-residue polypeptide: Maltoporin (398 aa).

The N-terminal stretch at 1 to 30 (MTDKNNKRLFKVAPLATAIAASLFTVNASA) is a signal peptide.

This sequence belongs to the porin LamB (TC 1.B.3) family. As to quaternary structure, homotrimer formed of three 18-stranded antiparallel beta-barrels, containing three independent channels.

The protein localises to the cell outer membrane. The catalysed reaction is beta-maltose(in) = beta-maltose(out). Involved in the transport of maltose and maltodextrins. In Hahella chejuensis (strain KCTC 2396), this protein is Maltoporin.